The sequence spans 696 residues: MIEQNKHQQLRIGLASPEQICAWSEKILPNGEIVGQVTKPYTLHYETNKPERDGSFCERIFGPIKSRVCACGNSPGIGNEKIDSKFCTQCGVEFVDSRIRRYQMGYIKLACPVVHVWYLKRLPSYIANLLAKTRKELEGPVYCDLFLARPIAKKPTLLRSRGTFNYEIQSWKDIIPHYLSARPHYLFARGSGTFKEREIATGGDAIGEQLTGLDLQMIIDRSHMEWKNLVELKWNRLEENQESTVDRWEDEKIRRRKDFLVGRIKLAKHFLRTNIEPKWMVLCLLPVLPPEPRPIVQLGEGGLITSSDLNELYRRVINRNNTLTNLLARSGSESFVICQKKLIQEAVDALLDNGICGQPMRDSHDRPYKSFSDVIEGKEGRFRENLLGKRVDYSGRSVIVVGPFLSLYQCGLPSEIAIELFQAFVIRSLIGRHIAPNLRAAKSMIRDKGPIVWEVLQEVMQGHPVLLNRAPTLHKLGIQAFQPILVEGRAIRLHPSVCGGFNADFDGDQMAVHVPLSLEARAEARLLMFSETNLLSPAIGDPISIPTQDMLLGLYISTVENSQGIYGNRYHPYHSEKKSFSCKKPSFYSYDDVLRAYRQKRIDLYSPLWLRWGELDLRIITSVNQEAPIEVQYESLGTFHEIHEHYRIRKGRMGEILNIYIRTTVGRTRFNREMEEAIQGFACFEHPKKSLPALRI.

Residues cysteine 69, cysteine 71, cysteine 87, and cysteine 90 each contribute to the Zn(2+) site. The Mg(2+) site is built by aspartate 504, aspartate 506, and aspartate 508.

Belongs to the RNA polymerase beta' chain family. RpoC1 subfamily. In terms of assembly, in plastids the minimal PEP RNA polymerase catalytic core is composed of four subunits: alpha, beta, beta', and beta''. When a (nuclear-encoded) sigma factor is associated with the core the holoenzyme is formed, which can initiate transcription. It depends on Mg(2+) as a cofactor. Zn(2+) is required as a cofactor.

It localises to the plastid. The protein resides in the chloroplast. It catalyses the reaction RNA(n) + a ribonucleoside 5'-triphosphate = RNA(n+1) + diphosphate. Its function is as follows. DNA-dependent RNA polymerase catalyzes the transcription of DNA into RNA using the four ribonucleoside triphosphates as substrates. The protein is DNA-directed RNA polymerase subunit beta' of Pinus koraiensis (Korean pine).